The sequence spans 464 residues: Glycosyl hydrolase family 109 protein 1 (464 aa).

Positions 1–16 are cleaved as a signal peptide; it reads MFKHLNALFIGLALFA. Cys-17 is lipidated: N-palmitoyl cysteine. Cys-17 carries S-diacylglycerol cysteine lipidation. NAD(+) contacts are provided by residues 63 to 64, Asp-85, 134 to 137, 154 to 155, and Asn-183; these read MR, WKHH, and EV. Residues Tyr-212, Arg-228, 240-243, and Tyr-318 contribute to the substrate site; that span reads YATH. Tyr-240 lines the NAD(+) pocket.

This sequence belongs to the Gfo/Idh/MocA family. Glycosyl hydrolase 109 subfamily. NAD(+) serves as cofactor.

The protein resides in the cell membrane. Glycosidase. Has no alpha-N-acetylgalactosaminidase activity. The sequence is that of Glycosyl hydrolase family 109 protein 1 from Bacteroides fragilis (strain ATCC 25285 / DSM 2151 / CCUG 4856 / JCM 11019 / LMG 10263 / NCTC 9343 / Onslow / VPI 2553 / EN-2).